The following is a 307-amino-acid chain: Cytochrome c1 2, heme protein, mitochondrial (307 aa).

The N-terminal 64 residues, 1–64, are a transit peptide targeting the mitochondrion; the sequence is MVGGGVIRQL…LLSFSTVASA (64 aa). Residues 65–270 lie on the Mitochondrial intermembrane side of the membrane; it reads DEAEHGLECP…EPEMEERKLM (206 aa). The Cytochrome c domain maps to 90 to 197; it reads ASIRRGHQVY…NGQNYVFALL (108 aa). Heme c-binding residues include cysteine 103, cysteine 106, histidine 107, and methionine 226. A helical membrane pass occupies residues 271-288; sequence GFKWIFLLSLALLQAAYY. Residues 289 to 307 are Mitochondrial matrix-facing; the sequence is RRLKWSVLKSRKLVLDVVN.

It belongs to the cytochrome c family. Component of the ubiquinol-cytochrome c oxidoreductase (cytochrome b-c1 complex, complex III, CIII), a multisubunit enzyme composed of 10 subunits. The complex is composed of 3 respiratory subunits cytochrome b (MT-CYB), cytochrome c1 (CYC1-1 or CYC1-2) and Rieske protein (UCR1-1 or UCR1-2), 2 core protein subunits MPPalpha1 (or MPPalpha2) and MPPB, and 5 low-molecular weight protein subunits QCR7-1 (or QCR7-2), UCRQ-1 (or UCRQ-2), QCR9, UCRY and probably QCR6-1 (or QCR6-2). The complex exists as an obligatory dimer and forms supercomplexes (SCs) in the inner mitochondrial membrane with NADH-ubiquinone oxidoreductase (complex I, CI), resulting in different assemblies (supercomplexes SCI(1)III(2) and SCI(2)III(4)). Post-translationally, binds 1 heme c group covalently per subunit.

It is found in the mitochondrion inner membrane. Component of the ubiquinol-cytochrome c oxidoreductase, a multisubunit transmembrane complex that is part of the mitochondrial electron transport chain which drives oxidative phosphorylation. The respiratory chain contains 3 multisubunit complexes succinate dehydrogenase (complex II, CII), ubiquinol-cytochrome c oxidoreductase (cytochrome b-c1 complex, complex III, CIII) and cytochrome c oxidase (complex IV, CIV), that cooperate to transfer electrons derived from NADH and succinate to molecular oxygen, creating an electrochemical gradient over the inner membrane that drives transmembrane transport and the ATP synthase. The cytochrome b-c1 complex catalyzes electron transfer from ubiquinol to cytochrome c, linking this redox reaction to translocation of protons across the mitochondrial inner membrane, with protons being carried across the membrane as hydrogens on the quinol. In the process called Q cycle, 2 protons are consumed from the matrix, 4 protons are released into the intermembrane space and 2 electrons are passed to cytochrome c. Cytochrome c1 is a catalytic core subunit containing a c-type heme. It transfers electrons from the [2Fe-2S] iron-sulfur cluster of the Rieske protein to cytochrome c. In Arabidopsis thaliana (Mouse-ear cress), this protein is Cytochrome c1 2, heme protein, mitochondrial (CYC1-2).